A 164-amino-acid polypeptide reads, in one-letter code: Peptidyl-prolyl cis-trans isomerase A-like 4A (164 aa).

A PPIase cyclophilin-type domain is found at 7–163; the sequence is FFDITVDGKP…KKITIADCGQ (157 aa).

The protein belongs to the cyclophilin-type PPIase family. PPIase A subfamily. As to expression, highly expressed in brain, ovary and mammary gland. Moderately expressed in lung, salivary gland, kidney, skin, adipose tissue, intestine and spleen. Weakly expressed in skeletal muscle, liver and stomach. Expressed in pleiomorphic and undifferentiated liposarcomas, osteosarcomas and breast carcinomas.

Its subcellular location is the cytoplasm. The catalysed reaction is [protein]-peptidylproline (omega=180) = [protein]-peptidylproline (omega=0). Functionally, PPIases accelerate the folding of proteins. It catalyzes the cis-trans isomerization of proline imidic peptide bonds in oligopeptides. This is Peptidyl-prolyl cis-trans isomerase A-like 4A from Homo sapiens (Human).